Here is a 37-residue protein sequence, read N- to C-terminus: Ferredoxin--NADP reductase, chloroplastic (37 aa).

NADP(+) contacts are provided by residues Ser3 and 24 to 25; that span reads SR.

This sequence belongs to the ferredoxin--NADP reductase type 1 family. FAD is required as a cofactor.

It is found in the plastid. The protein resides in the chloroplast stroma. The protein localises to the chloroplast thylakoid membrane. The catalysed reaction is 2 reduced [2Fe-2S]-[ferredoxin] + NADP(+) + H(+) = 2 oxidized [2Fe-2S]-[ferredoxin] + NADPH. It participates in energy metabolism; photosynthesis. Its function is as follows. May play a key role in regulating the relative amounts of cyclic and non-cyclic electron flow to meet the demands of the plant for ATP and reducing power. In Imperata cylindrica (Cogon grass), this protein is Ferredoxin--NADP reductase, chloroplastic.